The chain runs to 219 residues: NADH-quinone oxidoreductase subunit C (219 aa).

Belongs to the complex I 30 kDa subunit family. In terms of assembly, NDH-1 is composed of 14 different subunits. Subunits NuoB, C, D, E, F, and G constitute the peripheral sector of the complex.

The protein resides in the cell inner membrane. The enzyme catalyses a quinone + NADH + 5 H(+)(in) = a quinol + NAD(+) + 4 H(+)(out). NDH-1 shuttles electrons from NADH, via FMN and iron-sulfur (Fe-S) centers, to quinones in the respiratory chain. The immediate electron acceptor for the enzyme in this species is believed to be ubiquinone. Couples the redox reaction to proton translocation (for every two electrons transferred, four hydrogen ions are translocated across the cytoplasmic membrane), and thus conserves the redox energy in a proton gradient. The polypeptide is NADH-quinone oxidoreductase subunit C (Methylorubrum populi (strain ATCC BAA-705 / NCIMB 13946 / BJ001) (Methylobacterium populi)).